The sequence spans 276 residues: MRTLILLGILGATMSAPLIPQRLMSASNSNELLLNLNNAQLQPLQLQGPWIPPFPVILQQRQQQAQIPGLSQFSLANLDWFAGLVPNQRAFPGQVSFAQVTEARQLDPSQPQTSPQTQQGPNYVMPSLLSFKMPPEQGQMLQYYPVYMLLPWEQAQQTAAQSPPQTGQQLFEEQMPFYTELGYVPQQVEPVMPGGQQQPVFDPFLGTAPETAVMTAEVLPYFQKEMIQFKHSNGGIFIPSTSQKPSTTNVFTSTVDPTITPKVMEKKAKTDSLKEP.

The signal sequence occupies residues 1–15 (MRTLILLGILGATMS). Residues Thr-101, Thr-113, and Thr-117 are each glycosylated (O-linked (GalNAc...) threonine). Residues 125 to 127 (MPS) are interaction with ARHGEF5. Residue Ser-246 is glycosylated (O-linked (GalNAc...) serine). 3 O-linked (GalNAc...) threonine glycosylation sites follow: Thr-247, Thr-248, and Thr-252. Ser-253 carries O-linked (GalNAc...) serine glycosylation. Thr-254, Thr-258, Thr-260, and Thr-270 each carry an O-linked (GalNAc...) threonine glycan. An O-linked (GalNAc...) serine glycan is attached at Ser-272.

Belongs to the ODAM family. In terms of assembly, interacts (via C-terminus) with ARHGEF5. In terms of processing, O-glycosylated.

It localises to the secreted. Its subcellular location is the cytoplasm. The protein resides in the nucleus. Functionally, tooth-associated epithelia protein that probably plays a role in odontogenesis, the complex process that results in the initiation and generation of the tooth. May be incorporated in the enamel matrix at the end of mineralization process. Involved in the induction of RHOA activity via interaction with ARHGEF and expression of downstream factors such as ROCK. Plays a role in attachment of the junctional epithelium to the tooth surface. The sequence is that of Odontogenic ameloblast-associated protein (ODAM) from Sus scrofa (Pig).